The sequence spans 517 residues: MLNEPNALLRRDANSTIATVTELFPNEYSNADIAYVLLSTVVVFTVTPGIALYYAGMVRKNSALSILTQSFLVTAVVFIQWYLFGYSLACSSGSSFYGTLWQGGMNHLWLEPYIPGSTIPAIVYFPFGGLFAVATAQLFAGAMAERGRLIPSLVISFLYITLVYCPQAYWTWAPNGWLYTLGALDFAGGGPVHISSGFAALAYSLCLGRRIVVDEPDRPDSIRSTDNADLPSSSQNNCKANWKRWFGFKSVSWKNSFGRGKIAHNPPHDAGMVYIGVVLIWFAWLCFNSGTLLTVNIRTAYIMTNTLISSSFGALTWAIIDYIRYRKFSTIGICEGAIAGLVGITPACGFVFPWGAAAGGIVPALVCNFLHDLNEWIGVDETLRVFNLHGIGGIVGSIVLGVVAHPDVAASDGATVIDGGWAVHHWKQMGYQFAGFTSVAAWSFVITAIICLLVDLVPGLHIRASFEEELRGMDFVELEEQLPGQTLESKPMIIYAQEMDEPVTQGSNIKQEKQDEF.

Topologically, residues 1-32 are extracellular; that stretch reads MLNEPNALLRRDANSTIATVTELFPNEYSNAD. The helical transmembrane segment at 33-53 threads the bilayer; that stretch reads IAYVLLSTVVVFTVTPGIALY. Topologically, residues 54 to 69 are cytoplasmic; it reads YAGMVRKNSALSILTQ. A helical membrane pass occupies residues 70–90; the sequence is SFLVTAVVFIQWYLFGYSLAC. The Extracellular portion of the chain corresponds to 91–118; that stretch reads SSGSSFYGTLWQGGMNHLWLEPYIPGST. Residues 119-139 form a helical membrane-spanning segment; the sequence is IPAIVYFPFGGLFAVATAQLF. The Cytoplasmic segment spans residues 140 to 148; the sequence is AGAMAERGR. The helical transmembrane segment at 149–169 threads the bilayer; the sequence is LIPSLVISFLYITLVYCPQAY. At 170–180 the chain is on the extracellular side; it reads WTWAPNGWLYT. The chain crosses the membrane as a helical span at residues 181–201; the sequence is LGALDFAGGGPVHISSGFAAL. Over 202-272 the chain is Cytoplasmic; it reads AYSLCLGRRI…AHNPPHDAGM (71 aa). The chain crosses the membrane as a helical span at residues 273-293; the sequence is VYIGVVLIWFAWLCFNSGTLL. Residues 294–299 lie on the Extracellular side of the membrane; sequence TVNIRT. Residues 300–320 traverse the membrane as a helical segment; the sequence is AYIMTNTLISSSFGALTWAII. The Cytoplasmic segment spans residues 321–327; that stretch reads DYIRYRK. A helical transmembrane segment spans residues 328–348; sequence FSTIGICEGAIAGLVGITPAC. Position 349 (Gly-349) is a topological domain, extracellular. A helical membrane pass occupies residues 350 to 370; it reads FVFPWGAAAGGIVPALVCNFL. The Cytoplasmic segment spans residues 371–384; it reads HDLNEWIGVDETLR. The chain crosses the membrane as a helical span at residues 385-405; the sequence is VFNLHGIGGIVGSIVLGVVAH. The Extracellular segment spans residues 406-432; sequence PDVAASDGATVIDGGWAVHHWKQMGYQ. The helical transmembrane segment at 433–453 threads the bilayer; sequence FAGFTSVAAWSFVITAIICLL. The Cytoplasmic portion of the chain corresponds to 454–517; it reads VDLVPGLHIR…NIKQEKQDEF (64 aa).

The protein belongs to the ammonia transporter channel (TC 1.A.11.2) family.

It is found in the membrane. Its function is as follows. Transporter for ammonium to use as a nitrogen source. The chain is Ammonium transporter 3 (amt3) from Schizosaccharomyces pombe (strain 972 / ATCC 24843) (Fission yeast).